The following is a 180-amino-acid chain: NADH-quinone oxidoreductase subunit I (180 aa).

2 consecutive 4Fe-4S ferredoxin-type domains span residues 46 to 80 (GRIVLTCDPDGYERCVACNLCAVACPVDCISLQKT) and 90 to 119 (EFFRINFSRCIFCGLCEEACPTTAIQLTPD). 8 residues coordinate [4Fe-4S] cluster: Cys60, Cys63, Cys66, Cys70, Cys99, Cys102, Cys105, and Cys109.

It belongs to the complex I 23 kDa subunit family. As to quaternary structure, NDH-1 is composed of 14 different subunits. Subunits NuoA, H, J, K, L, M, N constitute the membrane sector of the complex. [4Fe-4S] cluster serves as cofactor.

Its subcellular location is the cell membrane. It catalyses the reaction a quinone + NADH + 5 H(+)(in) = a quinol + NAD(+) + 4 H(+)(out). In terms of biological role, NDH-1 shuttles electrons from NADH, via FMN and iron-sulfur (Fe-S) centers, to quinones in the respiratory chain. The immediate electron acceptor for the enzyme in this species is believed to be ubiquinone. Couples the redox reaction to proton translocation (for every two electrons transferred, four hydrogen ions are translocated across the cytoplasmic membrane), and thus conserves the redox energy in a proton gradient. The sequence is that of NADH-quinone oxidoreductase subunit I from Baumannia cicadellinicola subsp. Homalodisca coagulata.